A 139-amino-acid chain; its full sequence is Transmembrane protein 250 (139 aa).

The next 2 helical transmembrane spans lie at 56–76 and 116–136; these read FLLY…LAAL and VYGI…FMVF.

(Microbial infection) Interacts with herpes simplex virus 1/HHV-1 protein CVC2/UL25.

The protein resides in the membrane. The protein localises to the nucleus. It localises to the cytoplasm. In terms of biological role, may play a role in cell proliferation by promoting progression into S phase. (Microbial infection) Promotes human herpes simplex virus 1/HHV-1 proliferation. The polypeptide is Transmembrane protein 250 (Homo sapiens (Human)).